Reading from the N-terminus, the 223-residue chain is Protein BTG4 (223 aa).

It belongs to the BTG family. Interacts with CNOT7. Interacts with EIF4E. Interacts with CNOT8. Expressed in oocytes after germinal vesicle breakdown. Expressed in testis and in olfactory epithelium.

Functionally, adapter protein that bridges CNOT7, a catalytic subunit of the CCR4-NOT complex, to EIF4E. Facilitates maternal mRNAs decay during the maturation of oocytes and in the fertilized egg, and is required for the maternal-zygotic transition (MZT), zygotic cleavage and initiation of embryonic development. The sequence is that of Protein BTG4 (BTG4) from Homo sapiens (Human).